The chain runs to 86 residues: MNDFVFLVVACLLTAGTEGKKDGYPVEGDNCAFVCFGYDNAYCDKLCKDKKADSGYCYWVHILCYCYGLPDKEPTKTNGRCKPGKK.

The signal sequence occupies residues 1-19 (MNDFVFLVVACLLTAGTEG). An LCN-type CS-alpha/beta domain is found at 21–82 (KDGYPVEGDN…EPTKTNGRCK (62 aa)). 4 disulfide bridges follow: Cys-31-Cys-81, Cys-35-Cys-57, Cys-43-Cys-64, and Cys-47-Cys-66. Pro-83 carries the post-translational modification Proline amide.

It belongs to the long (4 C-C) scorpion toxin superfamily. Sodium channel inhibitor family. Alpha subfamily. Expressed by the venom gland.

The protein localises to the secreted. Functionally, alpha toxins bind voltage-independently at site-3 of sodium channels (Nav) and inhibit the inactivation of the activated channels, thereby blocking neuronal transmission. This chain is Alpha-toxin TbTx5, found in Tityus bahiensis (Brazilian scorpion).